The sequence spans 907 residues: MAINSSHHFCPMTTTTTTSAKFVDSLGSSFCKFHGTSSSISLRSYRFGFSFMKNVKRLSCEGSSSSSSSRNENWNRTQKQNQFRPSKVVLNRRKDERFSDLGVISGENSSRSGDVGGGSGSSSTMEKIVEKLKKYGFVDEDQFQDKEVEQERRIEKSSVEERFYVEERRGGFSEESPFGVYGGNDEVKFPWEKVSSMEKKELVNGEWTAKKESRYSLAEMTLSEFELNRLRNVMFRTKSKMRVTGAGVTQAVVDAIQEKWKGSEIVRLKIEGSSALNMRRMHEILERKTGGLVIWRSGTSIALYNYKGGSNRDGSGNMNKQVYRRAERLPSSLPTSTVDQSVQLVNLPQLEKEPTVVGNKDRTSPQEVEYEDEINELLEGLGPRYTDWQGGYPLPVDADLLPGIVPGYEPPFRALPYGVRSTLGTKEATSLRRIATVLPPHFALGRSRQLQGLATAMVKLWQKSLIAKVALKRGVQLTTSERMAEDIKRLTGGMLLSRNKDFLVFYRGKSFLSLEVGEALMEKEMLVRTLQDEEEQARLRASSALVVPSIKANQQLARTLQDKEEQARPSALVLPSTKANQNLVSAGTLGETLDATGKWGKNLDNDDHVEEMKQEVEKVRSAKLVRKLERKLAFAEKKLLKAERALAKVEESLKPAEQRTDLEGITEEERFMFQKLGLKMKAFLLLGRRGVFDGTVENMHLHWKYRELIKILVKAKTLEGAQKVAMALEAESGGILVSVDKISKGYAVIVYRGKDYKRPTTLRPKNLLTKRKALARSLELQKREALIKHIEAIQTRSEQLRAEIEQVELVKDKGDETLYDKLDMAYSSDEETEETDGEEDDVYLDTYEDEGEDDEEGGIQANGSLSETDVEFGSDESDTDFGDNSASSTTPETTFVELQNEELDVQP.

Residues 1-59 constitute a chloroplast transit peptide; sequence MAINSSHHFCPMTTTTTTSAKFVDSLGSSFCKFHGTSSSISLRSYRFGFSFMKNVKRLS. Disordered stretches follow at residues 62 to 89 and 101 to 123; these read GSSSSSSSRNENWNRTQKQNQFRPSKVV and LGVISGENSSRSGDVGGGSGSSS. The span at 70-84 shows a compositional bias: polar residues; the sequence is RNENWNRTQKQNQFR. CRM domains are found at residues 220–316 and 421–518; these read MTLS…DGSG and STLG…EVGE. A coiled-coil region spans residues 621-654; sequence SAKLVRKLERKLAFAEKKLLKAERALAKVEESLK. The region spanning 663-763 is the CRM 3 domain; the sequence is EGITEEERFM…KDYKRPTTLR (101 aa). The tract at residues 824–907 is disordered; that stretch reads MAYSSDEETE…LQNEELDVQP (84 aa). Acidic residues-rich tracts occupy residues 828–857 and 868–881; these read SDEETEETDGEEDDVYLDTYEDEGEDDEEG and TDVEFGSDESDTDF. A compositionally biased stretch (polar residues) spans 882–897; that stretch reads GDNSASSTTPETTFVE.

Interacts with RNA. Part of large ribonucleo-protein particles that contain CAF1 and/or CAF2, and RNC1. Interacts with RFC3 in plastids. As to expression, expressed at low levels in roots and shoots.

Its subcellular location is the plastid. The protein localises to the chloroplast. Functionally, binds specific group II introns in chloroplasts and facilitates their splicing. Exhibits non-specific action during plastid rRNA biogenesis; RFC3 prevents unaccurate splicing to improve the accuracy of plastid rRNA processing. Acts on subgroup IIB introns. The substrates of the subgroup IIB also require the CRM domain proteins CAF1 or CAF2, with a simultaneous binding of CFM3B and CAF1 or CAF2. Required for seed development. The protein is CRM-domain containing factor CFM3B, chloroplastic of Arabidopsis thaliana (Mouse-ear cress).